The following is a 123-amino-acid chain: RNA silencing suppressor (123 aa).

The interval 52–55 (KRRR) is basic. A C4-type zinc finger spans residues 62–83 (CVRCFRVNPGFYFTKRCDGITC).

The protein belongs to the carlaviruses nucleic acid-binding protein family.

Functionally, suppressor of viral-induced RNA silencing. The potential mechanism of action is based on sequestering siRNAs. The sequence is that of RNA silencing suppressor from Populus balsamifera (Balsam poplar).